A 305-amino-acid polypeptide reads, in one-letter code: Uridylate-specific endoribonuclease D (305 aa).

The first 17 residues, 1-17 (MKVYFVFLCLLPSLISG), serve as a signal peptide directing secretion. One can recognise an EndoU domain in the interval 33–305 (SNAEIQSLAE…RYVASSYPNI (273 aa)). Active-site residues include histidine 182, histidine 197, and lysine 240. N-linked (GlcNAc...) asparagine glycosylation occurs at asparagine 288.

Belongs to the ENDOU family. In terms of assembly, monomer. It depends on Mn(2+) as a cofactor.

It is found in the secreted. The enzyme catalyses ribonucleotidyl-uridine-RNA = a 5'-end dephospho-uridine-RNA + a 3'-end 2',3'-cyclophospho-ribonucleotide-RNA. In terms of biological role, endoribonuclease that cleaves single-stranded RNAs at 5' of uridylates and releases a product with a 2',3'-cyclic phosphate at the 3'-end. The polypeptide is Uridylate-specific endoribonuclease D (endou-d) (Xenopus laevis (African clawed frog)).